Here is a 396-residue protein sequence, read N- to C-terminus: Metacaspase-1 (396 aa).

Gly residues predominate over residues 1–20; the sequence is MSGYPGQGYQGQGYGQGYGQ. Positions 1 to 86 are disordered; sequence MSGYPGQGYQ…PQGMQQFGHG (86 aa). The span at 47–62 shows a compositional bias: low complexity; the sequence is HYQYGPPQGGYQYPPQ. Polar residues predominate over residues 72–81; that stretch reads QAHQPPQGMQ. Residues His-186 and Cys-242 contribute to the active site.

This sequence belongs to the peptidase C14B family.

Functionally, involved in cell death (apoptosis). The polypeptide is Metacaspase-1 (MCA1) (Pyricularia oryzae (strain 70-15 / ATCC MYA-4617 / FGSC 8958) (Rice blast fungus)).